Consider the following 236-residue polypeptide: Large ribosomal subunit protein uL3 (236 aa).

The segment covering 139–149 (SVSHRSHGSTG) has biased composition (low complexity). The segment at 139–165 (SVSHRSHGSTGQRQDPGKVFKGKKMAG) is disordered. Residue glutamine 152 is modified to N5-methylglutamine.

It belongs to the universal ribosomal protein uL3 family. As to quaternary structure, part of the 50S ribosomal subunit. Forms a cluster with proteins L14 and L19. Post-translationally, methylated by PrmB.

In terms of biological role, one of the primary rRNA binding proteins, it binds directly near the 3'-end of the 23S rRNA, where it nucleates assembly of the 50S subunit. In Pelagibacter ubique (strain HTCC1062), this protein is Large ribosomal subunit protein uL3.